The following is a 309-amino-acid chain: Mannitol-1-phosphatase (309 aa).

His82 (tele-phosphohistidine intermediate) is an active-site residue. The Proton donor/acceptor role is filled by Glu166.

It belongs to the phosphoglycerate mutase family.

The catalysed reaction is D-mannitol 1-phosphate + H2O = D-mannitol + phosphate. With respect to regulation, by diethyl pyrocarbonate (DEPC). In terms of biological role, key enzyme for mannitol biosynthesis. The chain is Mannitol-1-phosphatase from Eimeria tenella (Coccidian parasite).